The primary structure comprises 391 residues: Transmembrane protein 79 (391 aa).

A disordered region spans residues Met1–Asp114. The Cytoplasmic segment spans residues Met1 to Ser200. The segment covering Ala103–Asp114 has biased composition (basic and acidic residues). A helical transmembrane segment spans residues Val201–Phe221. The Extracellular portion of the chain corresponds to Asp222–Gly240. Residues Val241–Phe261 traverse the membrane as a helical segment. Residues Ser262–Gln279 lie on the Cytoplasmic side of the membrane. Residues Tyr280–Thr300 traverse the membrane as a helical segment. At Tyr301–Leu309 the chain is on the extracellular side. Residues Leu310–Val330 form a helical membrane-spanning segment. The Cytoplasmic portion of the chain corresponds to Gly331–Tyr339. A helical transmembrane segment spans residues Gly340–Val360. The Extracellular portion of the chain corresponds to Glu361 to Gly391.

Expressed in the epidermis of the skin. Expressed in epithelial cells of the outermost layer of the stratum granulosum (SG) and in hair follicles (at protein level).

It localises to the lysosome. The protein localises to the golgi apparatus. Its subcellular location is the trans-Golgi network. The protein resides in the membrane. In terms of biological role, contributes to the epidermal integrity and skin barrier function. Plays a role in the lamellar granule (LG) secretory system and in the stratum corneum (SC) epithelial cell formation. The sequence is that of Transmembrane protein 79 (Tmem79) from Mus musculus (Mouse).